The primary structure comprises 381 residues: E3 ubiquitin-protein ligase RNF13 (381 aa).

The N-terminal stretch at 1 to 34 is a signal peptide; sequence MLLSIGMLMLSATQVYTILTVQLFAFLNLLPVEA. Residues 35–182 are Lumenal-facing; it reads DILAYNFENA…VPEFSLPLEY (148 aa). In terms of domain architecture, PA spans 65 to 160; the sequence is KGFLINSKPE…GESSANSLKD (96 aa). Residue asparagine 88 is glycosylated (N-linked (GlcNAc...) asparagine). Residues 183–203 form a helical membrane-spanning segment; that stretch reads YLIPFLIIVGICLILIVIFMI. The Cytoplasmic portion of the chain corresponds to 204–381; it reads TKFVQDRHRA…ERDYNIANTV (178 aa). The segment at 240–282 adopts an RING-type; atypical zinc-finger fold; sequence CAICLDEYEDGDKLRILPCSHAYHCKCVDPWLTKTKKTCPVCK. Positions 285–381 are disordered; it reads VVPSQGDSDS…ERDYNIANTV (97 aa). Composition is skewed to acidic residues over residues 292-304 and 339-357; these read SDSD…EENE and SDYE…AENE.

Interacts with ERN1. Autoubiquitinated. Widely expressed (at protein level). In normal pancreas, expressed in islets, but not in ducts, nor in acini (at protein level).

The protein localises to the endoplasmic reticulum membrane. Its subcellular location is the late endosome membrane. The protein resides in the lysosome membrane. It localises to the nucleus inner membrane. It catalyses the reaction S-ubiquitinyl-[E2 ubiquitin-conjugating enzyme]-L-cysteine + [acceptor protein]-L-lysine = [E2 ubiquitin-conjugating enzyme]-L-cysteine + N(6)-ubiquitinyl-[acceptor protein]-L-lysine.. Its pathway is protein modification; protein ubiquitination. E3 ubiquitin-protein ligase that regulates cell proliferation. Involved in apoptosis regulation. Mediates ER stress-induced activation of JNK signaling pathway and apoptosis by promoting ERN1 activation and splicing of XBP1 mRNA. Also involved in protein trafficking and localization. The polypeptide is E3 ubiquitin-protein ligase RNF13 (Homo sapiens (Human)).